A 510-amino-acid chain; its full sequence is Adenosine deaminase 2 (510 aa).

The signal sequence occupies residues Met1 to Ser24. Positions Arg25 to Asn95 are dimerization. Residues His107 and His109 each coordinate Zn(2+). A substrate-binding site is contributed by Asp110. An N-linked (GlcNAc...) asparagine glycan is attached at Asn122. The tract at residues Asn122–Thr182 is PRB domain. Cys132 and Cys156 form a disulfide bridge. Asn171 carries N-linked (GlcNAc...) asparagine glycosylation. Substrate-binding positions include Trp201 to Phe208, His290, and Gly323. His353 is a binding site for Zn(2+). Residue Glu356 is the Proton donor of the active site. A glycan (N-linked (GlcNAc...) asparagine) is linked at Asn375. Residue His381 is the Proton acceptor of the active site. Residue Asp438 coordinates Zn(2+). Asp439 is a substrate binding site.

The protein belongs to the metallo-dependent hydrolases superfamily. Adenosine and AMP deaminases family. ADGF subfamily. Homodimer. Interacts with adenosine receptors. Binds heparin. Zn(2+) is required as a cofactor.

Its subcellular location is the secreted. The catalysed reaction is adenosine + H2O + H(+) = inosine + NH4(+). Adenosine deaminase that may contribute to the degradation of extracellular adenosine, a signaling molecule that controls a variety of cellular responses. Requires elevated adenosine levels for optimal enzyme activity. Binds to cell surfaces via proteoglycans and may play a role in the regulation of cell proliferation and differentiation, independently of its enzyme activity. The chain is Adenosine deaminase 2 from Sus scrofa (Pig).